The chain runs to 130 residues: Neelaredoxin (130 aa).

Positions 15, 17, 45, 51, 115, and 118 each coordinate Fe cation.

Belongs to the desulfoferrodoxin family. Monomer. The cofactor is Fe cation.

The catalysed reaction is 2 superoxide + 2 H(+) = H2O2 + O2. In terms of biological role, non-heme iron protein. The polypeptide is Neelaredoxin (nlr) (Megalodesulfovibrio gigas (Desulfovibrio gigas)).